Here is a 565-residue protein sequence, read N- to C-terminus: NAD-dependent malic enzyme (565 aa).

Tyr-104 (proton donor) is an active-site residue. Residue Arg-157 coordinates NAD(+). Lys-175 acts as the Proton acceptor in catalysis. Residues Glu-246, Asp-247, and Asp-270 each coordinate a divalent metal cation. The NAD(+) site is built by Asp-270 and Asn-418.

The protein belongs to the malic enzymes family. As to quaternary structure, homotetramer. Requires Mg(2+) as cofactor. Mn(2+) serves as cofactor.

It carries out the reaction (S)-malate + NAD(+) = pyruvate + CO2 + NADH. The catalysed reaction is oxaloacetate + H(+) = pyruvate + CO2. The protein is NAD-dependent malic enzyme of Photorhabdus laumondii subsp. laumondii (strain DSM 15139 / CIP 105565 / TT01) (Photorhabdus luminescens subsp. laumondii).